The primary structure comprises 515 residues: Signal transduction histidine-protein kinase/phosphatase MprB (515 aa).

At 1–24 (MTLPPPPSRLKPPRNTSSLSLRWR) the chain is on the cytoplasmic side. A helical transmembrane segment spans residues 25 to 45 (VMLLAMSMVAMVVVLMSVAVY). At 46–165 (AVVSRALYDD…TGQVLGRLGT (120 aa)) the chain is on the extracellular side. A helical transmembrane segment spans residues 166 to 186 (VLLIVGGVGVAVAAIAGGMVA). The region spanning 187 to 239 (RAGLRPVGRLTQAAERVARTDDLRPIPVFGSDELARLTEAFNMMLRALTESRE) is the HAMP domain. Residues 187–515 (RAGLRPVGRL…GKSRSASKEL (329 aa)) lie on the Cytoplasmic side of the membrane. The Histidine kinase domain maps to 247–467 (DAGHELRTPL…SFYVMLPGRP (221 aa)). Position 250 is a phosphohistidine; by autocatalysis (histidine 250). The segment at 468–515 (LTPGGNGTAPVPAAQFDPDMRSAGSRADRRVIKNTETNGKSRSASKEL) is disordered.

Requires Mg(2+) as cofactor. Mn(2+) is required as a cofactor. In terms of processing, autophosphorylated.

It is found in the cell membrane. The catalysed reaction is ATP + protein L-histidine = ADP + protein N-phospho-L-histidine.. Functionally, member of the two-component regulatory system MprB/MprA which contributes to maintaining a balance among several systems involved in stress resistance and is required for establishment and maintenance of persistent infection in the host. In response to environmental signals MprB acts both as a membrane-associated protein kinase that undergoes autophosphorylation and subsequently transfers the phosphate to MprA, and a protein phosphatase that dephosphorylates phospho-MprA. This is Signal transduction histidine-protein kinase/phosphatase MprB (mprB) from Mycobacterium sp. (strain KMS).